The primary structure comprises 265 residues: Synaptoporin (265 aa).

Over Met1–Val4 the chain is Cytoplasmic. The region spanning Met1–Gly202 is the MARVEL domain. Residues Ile5–Leu25 form a helical membrane-spanning segment. Residues Arg26–Phe81 are Vesicular-facing. N-linked (GlcNAc...) asparagine glycans are attached at residues Asn33 and Asn38. A helical membrane pass occupies residues Phe82–Phe102. Residues Phe103–Pro114 lie on the Cytoplasmic side of the membrane. A helical membrane pass occupies residues Leu115–Trp135. Residues Ala136–Asn177 are Vesicular-facing. A helical membrane pass occupies residues Thr178–Phe198. The Cytoplasmic segment spans residues Lys199–Ile265. A run of 5 repeats spans residues Tyr210–Pro214, Tyr222–Arg226, Tyr227–Ser231, Tyr232–Gly236, and Tyr238–Ala242. The interval Tyr210–Ala242 is 5 X approximate repeats. Phosphoserine is present on Ser212. The span at Ser221–Glu230 shows a compositional bias: polar residues. A disordered region spans residues Ser221–Ile265. Positions Gln240 to Ile265 are enriched in polar residues.

The protein belongs to the synaptophysin/synaptobrevin family.

It is found in the cytoplasmic vesicle. The protein resides in the secretory vesicle. It localises to the synaptic vesicle membrane. The protein localises to the synapse. Its subcellular location is the synaptosome. Intrinsic membrane protein of small synaptic vesicles. Probable vesicular channel protein. The sequence is that of Synaptoporin (Synpr) from Mus musculus (Mouse).